The sequence spans 135 residues: Mini-ribonuclease 3 (135 aa).

Asp-17 is an active-site residue.

This sequence belongs to the MrnC RNase family. Homodimer. It depends on Mg(2+) as a cofactor.

The protein localises to the cytoplasm. Functionally, involved in correct processing of both the 5' and 3' ends of 23S rRNA precursor. Processes 30S rRNA precursor transcript even in absence of ribonuclease 3 (Rnc); Rnc processes 30S rRNA into smaller rRNA precursors. In Bacillus cereus (strain ATCC 14579 / DSM 31 / CCUG 7414 / JCM 2152 / NBRC 15305 / NCIMB 9373 / NCTC 2599 / NRRL B-3711), this protein is Mini-ribonuclease 3.